A 452-amino-acid polypeptide reads, in one-letter code: Pup--protein ligase (452 aa).

A Mg(2+)-binding site is contributed by Glu-9. Residue Arg-53 participates in ATP binding. Tyr-55 is a binding site for Mg(2+). The active-site Proton acceptor is the Asp-57. Glu-63 lines the Mg(2+) pocket. Thr-66 and Trp-419 together coordinate ATP.

The protein belongs to the Pup ligase/Pup deamidase family. Pup-conjugating enzyme subfamily.

It carries out the reaction ATP + [prokaryotic ubiquitin-like protein]-L-glutamate + [protein]-L-lysine = ADP + phosphate + N(6)-([prokaryotic ubiquitin-like protein]-gamma-L-glutamyl)-[protein]-L-lysine.. It functions in the pathway protein degradation; proteasomal Pup-dependent pathway. Its pathway is protein modification; protein pupylation. In terms of biological role, catalyzes the covalent attachment of the prokaryotic ubiquitin-like protein modifier Pup to the proteasomal substrate proteins, thereby targeting them for proteasomal degradation. This tagging system is termed pupylation. The ligation reaction involves the side-chain carboxylate of the C-terminal glutamate of Pup and the side-chain amino group of a substrate lysine. This Mycobacterium ulcerans (strain Agy99) protein is Pup--protein ligase.